Consider the following 346-residue polypeptide: Methylthioribose-1-phosphate isomerase (346 aa).

Substrate is bound by residues 54 to 56 (RGA), Arg-91, and Gln-192. The active-site Proton donor is the Asp-233. 243–244 (NK) serves as a coordination point for substrate.

Belongs to the eIF-2B alpha/beta/delta subunits family. MtnA subfamily.

The enzyme catalyses 5-(methylsulfanyl)-alpha-D-ribose 1-phosphate = 5-(methylsulfanyl)-D-ribulose 1-phosphate. It functions in the pathway amino-acid biosynthesis; L-methionine biosynthesis via salvage pathway; L-methionine from S-methyl-5-thio-alpha-D-ribose 1-phosphate: step 1/6. Its function is as follows. Catalyzes the interconversion of methylthioribose-1-phosphate (MTR-1-P) into methylthioribulose-1-phosphate (MTRu-1-P). This chain is Methylthioribose-1-phosphate isomerase, found in Yersinia pseudotuberculosis serotype IB (strain PB1/+).